A 908-amino-acid polypeptide reads, in one-letter code: Zinc finger and BTB domain-containing protein 41 (908 aa).

The interval 38-59 (TQAPERPTPEAAQRCQELPPSP) is disordered. The BTB domain occupies 89-153 (CDLLIIVEGK…LYTSEFFVYK (65 aa)). Residues 208–231 (HQCKFCSRHFCYKKSLENHLAKTH) form a C2H2-type 1 zinc finger. The segment covering 252 to 261 (RRSKRNRKCP) has biased composition (basic residues). The tract at residues 252 to 344 (RRSKRNRKCP…EAGDSAGSIH (93 aa)) is disordered. Over residues 267 to 276 (TSDDEQESGD) the composition is skewed to acidic residues. Over residues 279 to 296 (DNLHQESSEKERSDRNDS) the composition is skewed to basic and acidic residues. The segment covering 297–336 (EDPGSEYNAEDEELEEEVSDEDSDTEQSDKDNDAEEEPEA) has biased composition (acidic residues). C2H2-type zinc fingers lie at residues 360-382 (LQCP…TRVH), 388-410 (FECD…RKKH), 421-444 (HKCP…KRFH), 462-484 (WKCD…MILH), 490-513 (FKCT…EKFH), 517-540 (FPCD…ECTH), 546-568 (WTCF…LRIH), 574-596 (HLCS…LRVH), 602-624 (YECD…KKIH), 630-653 (HQCE…KSVH), 667-689 (HQCD…FRTH), 695-717 (YKCQ…LVIH), and 723-746 (FNCQ…DHVH).

The protein resides in the nucleus. Its function is as follows. May be involved in transcriptional regulation. This chain is Zinc finger and BTB domain-containing protein 41 (Zbtb41), found in Mus musculus (Mouse).